The following is a 90-amino-acid chain: MARVTVQAAVEKVGNRFKLILVAVHRARLLQSGRENSLVPEENDKVTVIALREIEQGLITESILKENNQHEDQIQKKVQMKTISSTQDFD.

It belongs to the RNA polymerase subunit omega family. As to quaternary structure, the RNAP catalytic core consists of 2 alpha, 1 beta, 1 beta' and 1 omega subunit. When a sigma factor is associated with the core the holoenzyme is formed, which can initiate transcription.

The catalysed reaction is RNA(n) + a ribonucleoside 5'-triphosphate = RNA(n+1) + diphosphate. Its function is as follows. Promotes RNA polymerase assembly. Latches the N- and C-terminal regions of the beta' subunit thereby facilitating its interaction with the beta and alpha subunits. This chain is DNA-directed RNA polymerase subunit omega, found in Hamiltonella defensa subsp. Acyrthosiphon pisum (strain 5AT).